We begin with the raw amino-acid sequence, 212 residues long: Pyridoxine/pyridoxamine 5'-phosphate oxidase (212 aa).

Substrate is bound by residues 7–10 (RREY) and K66. Residues 61-66 (RIVLLK), 76-77 (YT), K83, and Q105 each bind FMN. Substrate is bound by residues Y123, R127, and S131. FMN-binding positions include 140 to 141 (QS) and W185. 191-193 (RLH) is a binding site for substrate. R195 lines the FMN pocket.

It belongs to the pyridoxamine 5'-phosphate oxidase family. As to quaternary structure, homodimer. It depends on FMN as a cofactor.

It carries out the reaction pyridoxamine 5'-phosphate + O2 + H2O = pyridoxal 5'-phosphate + H2O2 + NH4(+). The catalysed reaction is pyridoxine 5'-phosphate + O2 = pyridoxal 5'-phosphate + H2O2. The protein operates within cofactor metabolism; pyridoxal 5'-phosphate salvage; pyridoxal 5'-phosphate from pyridoxamine 5'-phosphate: step 1/1. It participates in cofactor metabolism; pyridoxal 5'-phosphate salvage; pyridoxal 5'-phosphate from pyridoxine 5'-phosphate: step 1/1. In terms of biological role, catalyzes the oxidation of either pyridoxine 5'-phosphate (PNP) or pyridoxamine 5'-phosphate (PMP) into pyridoxal 5'-phosphate (PLP). In Idiomarina loihiensis (strain ATCC BAA-735 / DSM 15497 / L2-TR), this protein is Pyridoxine/pyridoxamine 5'-phosphate oxidase.